The chain runs to 218 residues: Ras-related protein RABA1h (218 aa).

A GTP-binding site is contributed by 20 to 27 (GDSGVGKS). Residues 42-50 (SRSTIGVEF) carry the Effector region motif. GTP contacts are provided by residues 68 to 72 (DTAGQ), 126 to 129 (NKAD), and 156 to 157 (SA). Residues Cys215 and Cys216 are each lipidated (S-geranylgeranyl cysteine).

It belongs to the small GTPase superfamily. Rab family.

Its subcellular location is the cell membrane. Functionally, intracellular vesicle trafficking and protein transport. This Arabidopsis thaliana (Mouse-ear cress) protein is Ras-related protein RABA1h (RABA1H).